We begin with the raw amino-acid sequence, 459 residues long: UDP-N-acetylmuramoylalanine--D-glutamate ligase (459 aa).

119–125 (GTNGKTT) provides a ligand contact to ATP.

It belongs to the MurCDEF family.

The protein localises to the cytoplasm. It carries out the reaction UDP-N-acetyl-alpha-D-muramoyl-L-alanine + D-glutamate + ATP = UDP-N-acetyl-alpha-D-muramoyl-L-alanyl-D-glutamate + ADP + phosphate + H(+). The protein operates within cell wall biogenesis; peptidoglycan biosynthesis. Functionally, cell wall formation. Catalyzes the addition of glutamate to the nucleotide precursor UDP-N-acetylmuramoyl-L-alanine (UMA). This Lacticaseibacillus paracasei (strain ATCC 334 / BCRC 17002 / CCUG 31169 / CIP 107868 / KCTC 3260 / NRRL B-441) (Lactobacillus paracasei) protein is UDP-N-acetylmuramoylalanine--D-glutamate ligase.